Reading from the N-terminus, the 722-residue chain is Biotin--protein ligase (722 aa).

Positions Lys-27–Leu-93 are disordered. Residues Ala-46–Gly-55 show a composition bias toward low complexity. At Ser-295 the chain carries Phosphoserine. The BPL/LPL catalytic domain occupies Thr-459–Gln-648.

This sequence belongs to the biotin--protein ligase family. As to quaternary structure, monomer.

It is found in the cytoplasm. Its subcellular location is the mitochondrion. It carries out the reaction apo-[methylmalonyl-CoA:pyruvate carboxytransferase] + biotin + ATP = holo-[methylmalonyl-CoA:pyruvate carboxytransferase] + AMP + diphosphate + H(+). The catalysed reaction is apo-[propionyl-CoA:carbon-dioxide ligase (ADP-forming)] + biotin + ATP = holo-[propionyl-CoA:carbon-dioxide ligase (ADP-forming)] + AMP + diphosphate + H(+). The enzyme catalyses apo-[3-methylcrotonoyl-CoA:carbon-dioxide ligase (ADP-forming)] + biotin + ATP = holo-[3-methylcrotonoyl-CoA:carbon-dioxide ligase (ADP-forming)] + AMP + diphosphate + H(+). It catalyses the reaction biotin + L-lysyl-[protein] + ATP = N(6)-biotinyl-L-lysyl-[protein] + AMP + diphosphate + H(+). In terms of biological role, biotin--protein ligase catalyzing the biotinylation of the 4 biotin-dependent carboxylases acetyl-CoA-carboxylase, pyruvate carboxylase, propionyl-CoA carboxylase, and methylcrotonyl-CoA carboxylase. The chain is Biotin--protein ligase from Mus musculus (Mouse).